A 283-amino-acid chain; its full sequence is Phosphatidylserine decarboxylase proenzyme (283 aa).

Active-site charge relay system; for autoendoproteolytic cleavage activity residues include aspartate 89, histidine 146, and serine 249. Residue serine 249 is the Schiff-base intermediate with substrate; via pyruvic acid; for decarboxylase activity of the active site. Serine 249 carries the pyruvic acid (Ser); by autocatalysis modification.

This sequence belongs to the phosphatidylserine decarboxylase family. PSD-B subfamily. Prokaryotic type I sub-subfamily. As to quaternary structure, heterodimer of a large membrane-associated beta subunit and a small pyruvoyl-containing alpha subunit. Pyruvate is required as a cofactor. In terms of processing, is synthesized initially as an inactive proenzyme. Formation of the active enzyme involves a self-maturation process in which the active site pyruvoyl group is generated from an internal serine residue via an autocatalytic post-translational modification. Two non-identical subunits are generated from the proenzyme in this reaction, and the pyruvate is formed at the N-terminus of the alpha chain, which is derived from the carboxyl end of the proenzyme. The autoendoproteolytic cleavage occurs by a canonical serine protease mechanism, in which the side chain hydroxyl group of the serine supplies its oxygen atom to form the C-terminus of the beta chain, while the remainder of the serine residue undergoes an oxidative deamination to produce ammonia and the pyruvoyl prosthetic group on the alpha chain. During this reaction, the Ser that is part of the protease active site of the proenzyme becomes the pyruvoyl prosthetic group, which constitutes an essential element of the active site of the mature decarboxylase.

The protein resides in the cell membrane. It catalyses the reaction a 1,2-diacyl-sn-glycero-3-phospho-L-serine + H(+) = a 1,2-diacyl-sn-glycero-3-phosphoethanolamine + CO2. It participates in phospholipid metabolism; phosphatidylethanolamine biosynthesis; phosphatidylethanolamine from CDP-diacylglycerol: step 2/2. Catalyzes the formation of phosphatidylethanolamine (PtdEtn) from phosphatidylserine (PtdSer). The sequence is that of Phosphatidylserine decarboxylase proenzyme from Legionella pneumophila subsp. pneumophila (strain Philadelphia 1 / ATCC 33152 / DSM 7513).